The following is a 4639-amino-acid chain: Dynein heavy chain, cytoplasmic (4639 aa).

Residues 1 to 1856 form a stem region; that stretch reads MGDSLENPDT…TIHMANARFF (1856 aa). Coiled coils occupy residues 530-565, 774-794, and 1264-1368; these read LDIT…LRDQ, SLIE…DRAS, and DDAL…ARLR. 4 AAA regions span residues 1857-2084, 2166-2437, 2541-2790, and 2884-3153; these read YGFE…VLIS, EEIR…FTRL, EVET…WVRG, and VFYE…GGRT. Residues 1895–1902, 2210–2217, 2580–2587, and 2922–2929 each bind ATP; these read GPAGTGKT, GPSGSGKS, GPPGSGKT, and GVSGAGKT. 3 coiled-coil regions span residues 3189-3261, 3382-3478, and 3723-3782; these read GLNK…EKRK, AIAQ…WEST, and EFRL…EIET. The interval 3189–3478 is stalk; that stretch reads GLNKIAETVE…NIERERWEST (290 aa). AAA stretches follow at residues 3539–3768 and 3989–4205; these read LSNP…DINQ and AHNV…TLDT.

It belongs to the dynein heavy chain family. As to quaternary structure, consists of at least two heavy chains and a number of intermediate and light chains.

It is found in the cytoplasm. It localises to the cytoskeleton. Cytoplasmic dynein acts as a motor for the intracellular retrograde motility of vesicles and organelles along microtubules. Dynein has ATPase activity; the force-producing power stroke is thought to occur on release of ADP. The chain is Dynein heavy chain, cytoplasmic (Dhc64C) from Drosophila melanogaster (Fruit fly).